Reading from the N-terminus, the 490-residue chain is MAADPSSNSSSVPAANGADYADTASAAYQAALQVIESVEPRVAAATRKELADQRDSLKLIASENYASPAVLLTMGTWFSDKYAEGTIGHRFYAGCQNVDTVESVAAEHARELFGAPYAYVQPHSGIDANLVAFWAILATRVEAPELANFGAKHINDLSEADWETLRNKLGNQRLLGMSLDAGGHLTHGFRPNISGKMFHQRSYGTNPETGFLDYDAVAAAAREFKPLVLVAGYSAYPRRVNFAKMREIADEVGATLMVDMAHFAGLVAGKVFTGDEDPVPHAHVTTTTTHKSLRGPRGGMVLATEEYAPAVDKGCPMVLGGPLSHVMAAKAVALAEARQPAFQQYAQQVADNAQALADGFVKRDAGLVTGGTDNHIVLLDVTSFGLTGRQAESALLDAGIVTNRNSIPADPNGAWYTSGVRLGTPALTSRGFGADDFDRVAELIVEVLANTQPEGTSKAKYKLADGTAERVHAASSELLSANPLYPGLTL.

(6S)-5,6,7,8-tetrahydrofolate-binding positions include leucine 179 and 183 to 185 (GHL). The residue at position 291 (lysine 291) is an N6-(pyridoxal phosphate)lysine. Lysine 362 participates in a covalent cross-link: Isoglutamyl lysine isopeptide (Lys-Gln) (interchain with Q-Cter in protein Pup).

The protein belongs to the SHMT family. In terms of assembly, homodimer. Pyridoxal 5'-phosphate serves as cofactor.

Its subcellular location is the cytoplasm. The enzyme catalyses (6R)-5,10-methylene-5,6,7,8-tetrahydrofolate + glycine + H2O = (6S)-5,6,7,8-tetrahydrofolate + L-serine. The protein operates within one-carbon metabolism; tetrahydrofolate interconversion. It functions in the pathway amino-acid biosynthesis; glycine biosynthesis; glycine from L-serine: step 1/1. Functionally, catalyzes the reversible interconversion of serine and glycine with tetrahydrofolate (THF) serving as the one-carbon carrier. This reaction serves as the major source of one-carbon groups required for the biosynthesis of purines, thymidylate, methionine, and other important biomolecules. Also exhibits THF-independent aldolase activity toward beta-hydroxyamino acids, producing glycine and aldehydes, via a retro-aldol mechanism. The polypeptide is Serine hydroxymethyltransferase (Mycolicibacterium smegmatis (strain ATCC 700084 / mc(2)155) (Mycobacterium smegmatis)).